Here is a 538-residue protein sequence, read N- to C-terminus: NAD(P)H-quinone oxidoreductase chain 4 (538 aa).

14 helical membrane-spanning segments follow: residues 11–31, 43–63, 95–115, 119–139, 143–163, 175–195, 217–237, 251–271, 285–305, 314–334, 340–360, 382–404, 425–445, and 472–492; these read FPWL…VPFI, YALI…FKGF, MPLI…AWPV, PKLF…VFAV, LLFF…LAIW, FIIY…AMGF, GFQL…LPIV, TAPV…YALL, FAPL…LTSF, IAYS…SFSS, AMLQ…LVGA, IMFA…SGFI, IVVA…LLSM, and IYII…PKIM.

The protein belongs to the complex I subunit 4 family.

It is found in the cellular thylakoid membrane. The enzyme catalyses a plastoquinone + NADH + (n+1) H(+)(in) = a plastoquinol + NAD(+) + n H(+)(out). The catalysed reaction is a plastoquinone + NADPH + (n+1) H(+)(in) = a plastoquinol + NADP(+) + n H(+)(out). NDH-1 shuttles electrons from NAD(P)H, via FMN and iron-sulfur (Fe-S) centers, to quinones in the respiratory chain. The immediate electron acceptor for the enzyme in this species is believed to be plastoquinone. Couples the redox reaction to proton translocation (for every two electrons transferred, four hydrogen ions are translocated across the cytoplasmic membrane), and thus conserves the redox energy in a proton gradient. This chain is NAD(P)H-quinone oxidoreductase chain 4, found in Prochlorococcus marinus (strain NATL2A).